A 135-amino-acid polypeptide reads, in one-letter code: Large ribosomal subunit protein uL18 (135 aa).

Residues 1-23 (MSQTANQKAKRIPLGKDASTKRR) form a disordered region.

This sequence belongs to the universal ribosomal protein uL18 family. Part of the 50S ribosomal subunit; part of the 5S rRNA/L5/L18/L25 subcomplex. Contacts the 5S and 23S rRNAs.

In terms of biological role, this is one of the proteins that bind and probably mediate the attachment of the 5S RNA into the large ribosomal subunit, where it forms part of the central protuberance. This is Large ribosomal subunit protein uL18 from Rhodococcus jostii (strain RHA1).